The chain runs to 247 residues: MSDPLILIPARLGATRLPDKPLADICGEPMIVHVWRRAIAAGLGPVVVCTDAPTVVAAVEAVGGLAVLTRPDHPSGSDRLAEALGIIDPEGRHDVVVNLQGDLPTIDPGIVAAAVTPLADRAVDIATLCAVITRDEERTEPSVVKLVGSPITPTRLRALYFTRATAPWGEGPLYHHIGLYAYRRRALERFVSLSPSVLERREKLEQLRALEAGMRIDAVVVDDVPLGVDTPHDLDRARAVMAARRLN.

The protein belongs to the KdsB family.

It localises to the cytoplasm. The enzyme catalyses 3-deoxy-alpha-D-manno-oct-2-ulosonate + CTP = CMP-3-deoxy-beta-D-manno-octulosonate + diphosphate. The protein operates within nucleotide-sugar biosynthesis; CMP-3-deoxy-D-manno-octulosonate biosynthesis; CMP-3-deoxy-D-manno-octulosonate from 3-deoxy-D-manno-octulosonate and CTP: step 1/1. It functions in the pathway bacterial outer membrane biogenesis; lipopolysaccharide biosynthesis. In terms of biological role, activates KDO (a required 8-carbon sugar) for incorporation into bacterial lipopolysaccharide in Gram-negative bacteria. This Methylobacterium nodulans (strain LMG 21967 / CNCM I-2342 / ORS 2060) protein is 3-deoxy-manno-octulosonate cytidylyltransferase.